A 40-amino-acid chain; its full sequence is Photosystem II reaction center protein J (40 aa).

The chain crosses the membrane as a helical span at residues 8–28 (IPLWIIGTVTGILVIGLVGIF).

Belongs to the PsbJ family. As to quaternary structure, PSII is composed of 1 copy each of membrane proteins PsbA, PsbB, PsbC, PsbD, PsbE, PsbF, PsbH, PsbI, PsbJ, PsbK, PsbL, PsbM, PsbT, PsbX, PsbY, PsbZ, Psb30/Ycf12, at least 3 peripheral proteins of the oxygen-evolving complex and a large number of cofactors. It forms dimeric complexes.

Its subcellular location is the plastid. It localises to the chloroplast thylakoid membrane. One of the components of the core complex of photosystem II (PSII). PSII is a light-driven water:plastoquinone oxidoreductase that uses light energy to abstract electrons from H(2)O, generating O(2) and a proton gradient subsequently used for ATP formation. It consists of a core antenna complex that captures photons, and an electron transfer chain that converts photonic excitation into a charge separation. The polypeptide is Photosystem II reaction center protein J (Jasminum nudiflorum (Winter jasmine)).